The primary structure comprises 398 residues: Phosphoglycerate kinase (398 aa).

Residues D23 to N25, R38, H61 to K64, R122, and R155 each bind substrate. Residues K206, G297, E328, and G354–S357 contribute to the ATP site.

It belongs to the phosphoglycerate kinase family. As to quaternary structure, monomer.

The protein resides in the cytoplasm. The enzyme catalyses (2R)-3-phosphoglycerate + ATP = (2R)-3-phospho-glyceroyl phosphate + ADP. It participates in carbohydrate degradation; glycolysis; pyruvate from D-glyceraldehyde 3-phosphate: step 2/5. In Clostridium botulinum (strain Okra / Type B1), this protein is Phosphoglycerate kinase.